We begin with the raw amino-acid sequence, 244 residues long: 6-carboxyhexanoate--CoA ligase (244 aa).

It belongs to the BioW family. Homodimer. It depends on Mg(2+) as a cofactor.

It carries out the reaction heptanedioate + ATP + CoA = 6-carboxyhexanoyl-CoA + AMP + diphosphate. Its pathway is metabolic intermediate metabolism; pimeloyl-CoA biosynthesis; pimeloyl-CoA from pimelate: step 1/1. Functionally, catalyzes the transformation of pimelate into pimeloyl-CoA with concomitant hydrolysis of ATP to AMP. The chain is 6-carboxyhexanoate--CoA ligase from Hydrogenobacter thermophilus (strain DSM 6534 / IAM 12695 / TK-6).